The primary structure comprises 29 residues: Dermaseptin-J5 (29 aa).

Residue Val29 is modified to Valine amide.

Expressed by the skin glands.

Its subcellular location is the secreted. Functionally, has antimicrobial activity. In Phasmahyla jandaia (Jandaia leaf frog), this protein is Dermaseptin-J5.